The primary structure comprises 203 residues: MAGEIPDFQAEVRTGTGKGAARQARREGYVPGIVYGGGQEPLSINVPYNDLLNRLKKGRFLQTLFNLKVEGQEDVRVICRGVQRDVVKDLPTHVDFMRLRRTSRVNLFIHVTFENHDKAPGLKRGGTLTVVRPEVELEVTAGDIPDHLTVDLTDRQIGDVIHINDIKLPEGAVPTINRNFVIANISAPSGLRSSDNEEEAEEA.

This sequence belongs to the bacterial ribosomal protein bL25 family. CTC subfamily. In terms of assembly, part of the 50S ribosomal subunit; part of the 5S rRNA/L5/L18/L25 subcomplex. Contacts the 5S rRNA. Binds to the 5S rRNA independently of L5 and L18.

In terms of biological role, this is one of the proteins that binds to the 5S RNA in the ribosome where it forms part of the central protuberance. This is Large ribosomal subunit protein bL25 from Cereibacter sphaeroides (strain ATCC 17029 / ATH 2.4.9) (Rhodobacter sphaeroides).